The chain runs to 275 residues: Large ribosomal subunit protein uL2 (275 aa).

The segment covering 28-38 (RPYDGLLEKKS) has biased composition (basic and acidic residues). 2 disordered regions span residues 28–58 (RPYD…GGGH) and 223–275 (VAMN…RKAK). Over residues 254-275 (KGHKTRKNKRTDKLIVRRRKAK) the composition is skewed to basic residues.

It belongs to the universal ribosomal protein uL2 family. In terms of assembly, part of the 50S ribosomal subunit. Forms a bridge to the 30S subunit in the 70S ribosome.

Its function is as follows. One of the primary rRNA binding proteins. Required for association of the 30S and 50S subunits to form the 70S ribosome, for tRNA binding and peptide bond formation. It has been suggested to have peptidyltransferase activity; this is somewhat controversial. Makes several contacts with the 16S rRNA in the 70S ribosome. The protein is Large ribosomal subunit protein uL2 of Chromohalobacter salexigens (strain ATCC BAA-138 / DSM 3043 / CIP 106854 / NCIMB 13768 / 1H11).